The sequence spans 242 residues: 3-dehydroquinate dehydratase (242 aa).

Residues 39–41 (EVR) and Arg73 each bind 3-dehydroquinate. Catalysis depends on His135, which acts as the Proton donor/acceptor. Lys162 (schiff-base intermediate with substrate) is an active-site residue. 2 residues coordinate 3-dehydroquinate: Arg203 and Gln228.

It belongs to the type-I 3-dehydroquinase family. Homodimer.

It catalyses the reaction 3-dehydroquinate = 3-dehydroshikimate + H2O. It functions in the pathway metabolic intermediate biosynthesis; chorismate biosynthesis; chorismate from D-erythrose 4-phosphate and phosphoenolpyruvate: step 3/7. Functionally, involved in the third step of the chorismate pathway, which leads to the biosynthesis of aromatic amino acids. Catalyzes the cis-dehydration of 3-dehydroquinate (DHQ) and introduces the first double bond of the aromatic ring to yield 3-dehydroshikimate. The protein is 3-dehydroquinate dehydratase of Methanosarcina acetivorans (strain ATCC 35395 / DSM 2834 / JCM 12185 / C2A).